We begin with the raw amino-acid sequence, 250 residues long: Small ribosomal subunit protein uS3 (250 aa).

A KH type-2 domain is found at 39–111 (IRTLIKNHYP…KVQINIFEVK (73 aa)).

The protein belongs to the universal ribosomal protein uS3 family. As to quaternary structure, part of the 30S ribosomal subunit. Forms a tight complex with proteins S10 and S14.

Binds the lower part of the 30S subunit head. Binds mRNA in the 70S ribosome, positioning it for translation. The protein is Small ribosomal subunit protein uS3 of Phytoplasma vitis (Flavescence doree phytoplasma).